Here is a 267-residue protein sequence, read N- to C-terminus: Cell division protein FtsQ (267 aa).

Over 1–32 (MRKKTSSNKKKQTKKTNNISLRRKLGLMYKKA) the chain is Cytoplasmic. A helical membrane pass occupies residues 33–53 (ILGLKIALIIFVCLFVFTKYF). Topologically, residues 54 to 267 (AGIKTYLTTN…DKNKYYIEKY (214 aa)) are periplasmic. The POTRA domain occupies 73 to 141 (FKLENVIIEG…NTVYIKLFER (69 aa)).

The protein belongs to the FtsQ/DivIB family. FtsQ subfamily.

Its subcellular location is the cell inner membrane. Its function is as follows. Essential cell division protein. The chain is Cell division protein FtsQ from Rickettsia conorii (strain ATCC VR-613 / Malish 7).